Reading from the N-terminus, the 422-residue chain is UDP-N-acetylglucosamine 1-carboxyvinyltransferase (422 aa).

Residue 24 to 25 (KN) participates in phosphoenolpyruvate binding. Arg93 is a binding site for UDP-N-acetyl-alpha-D-glucosamine. Residue Cys117 is the Proton donor of the active site. Cys117 carries the 2-(S-cysteinyl)pyruvic acid O-phosphothioketal modification. Residues 122–126 (RPVDL), 162–165 (KVSV), Asp307, and Ile329 contribute to the UDP-N-acetyl-alpha-D-glucosamine site.

The protein belongs to the EPSP synthase family. MurA subfamily.

The protein localises to the cytoplasm. The catalysed reaction is phosphoenolpyruvate + UDP-N-acetyl-alpha-D-glucosamine = UDP-N-acetyl-3-O-(1-carboxyvinyl)-alpha-D-glucosamine + phosphate. It participates in cell wall biogenesis; peptidoglycan biosynthesis. Functionally, cell wall formation. Adds enolpyruvyl to UDP-N-acetylglucosamine. The polypeptide is UDP-N-acetylglucosamine 1-carboxyvinyltransferase (Vibrio atlanticus (strain LGP32) (Vibrio splendidus (strain Mel32))).